Here is a 90-residue protein sequence, read N- to C-terminus: Probable Fe(2+)-trafficking protein (90 aa).

The protein belongs to the Fe(2+)-trafficking protein family. As to quaternary structure, monomer.

Its function is as follows. Could be a mediator in iron transactions between iron acquisition and iron-requiring processes, such as synthesis and/or repair of Fe-S clusters in biosynthetic enzymes. The sequence is that of Probable Fe(2+)-trafficking protein from Edwardsiella ictaluri (strain 93-146).